The primary structure comprises 309 residues: 4-diphosphocytidyl-2-C-methyl-D-erythritol kinase (309 aa).

Lys-11 is a catalytic residue. 94–104 contacts ATP; sequence PVAAGLAGGSA. Asp-136 is a catalytic residue.

The protein belongs to the GHMP kinase family. IspE subfamily.

It catalyses the reaction 4-CDP-2-C-methyl-D-erythritol + ATP = 4-CDP-2-C-methyl-D-erythritol 2-phosphate + ADP + H(+). It participates in isoprenoid biosynthesis; isopentenyl diphosphate biosynthesis via DXP pathway; isopentenyl diphosphate from 1-deoxy-D-xylulose 5-phosphate: step 3/6. Functionally, catalyzes the phosphorylation of the position 2 hydroxy group of 4-diphosphocytidyl-2C-methyl-D-erythritol. The chain is 4-diphosphocytidyl-2-C-methyl-D-erythritol kinase from Synechococcus sp. (strain JA-3-3Ab) (Cyanobacteria bacterium Yellowstone A-Prime).